A 146-amino-acid polypeptide reads, in one-letter code: Phospholipase A2 147 (146 aa).

An N-terminal signal peptide occupies residues 1-19 (MYPAHLLVLLAVCVSLLGA). Positions 20 to 27 (ASVPPQPL) are excised as a propeptide. 7 disulfide bridges follow: Cys38–Cys98, Cys54–Cys145, Cys56–Cys72, Cys71–Cys126, Cys78–Cys119, Cys87–Cys112, and Cys105–Cys117. 3 residues coordinate Ca(2+): Tyr55, Gly57, and Gly59. Residue His75 is part of the active site. Asp76 contributes to the Ca(2+) binding site. Residue Asp120 is part of the active site.

This sequence belongs to the phospholipase A2 family. Group I subfamily. D49 sub-subfamily. Ca(2+) is required as a cofactor. Expressed by the venom gland.

It is found in the secreted. It carries out the reaction a 1,2-diacyl-sn-glycero-3-phosphocholine + H2O = a 1-acyl-sn-glycero-3-phosphocholine + a fatty acid + H(+). In terms of biological role, snake venom phospholipase A2 (PLA2) that inhibits collagen-induced platelet aggregation. PLA2 catalyzes the calcium-dependent hydrolysis of the 2-acyl groups in 3-sn-phosphoglycerides. This Drysdalia coronoides (White-lipped snake) protein is Phospholipase A2 147.